A 494-amino-acid polypeptide reads, in one-letter code: Probable cytosol aminopeptidase (494 aa).

Mn(2+) is bound by residues Lys260 and Asp265. Lys272 is an active-site residue. Mn(2+) contacts are provided by Asp283, Asp342, and Glu344. Arg346 is a catalytic residue.

Belongs to the peptidase M17 family. Requires Mn(2+) as cofactor.

It localises to the cytoplasm. The enzyme catalyses Release of an N-terminal amino acid, Xaa-|-Yaa-, in which Xaa is preferably Leu, but may be other amino acids including Pro although not Arg or Lys, and Yaa may be Pro. Amino acid amides and methyl esters are also readily hydrolyzed, but rates on arylamides are exceedingly low.. It carries out the reaction Release of an N-terminal amino acid, preferentially leucine, but not glutamic or aspartic acids.. Its function is as follows. Presumably involved in the processing and regular turnover of intracellular proteins. Catalyzes the removal of unsubstituted N-terminal amino acids from various peptides. This chain is Probable cytosol aminopeptidase, found in Bacillus cereus (strain AH187).